We begin with the raw amino-acid sequence, 137 residues long: Putative pre-16S rRNA nuclease (137 aa).

The protein belongs to the YqgF nuclease family.

The protein resides in the cytoplasm. Could be a nuclease involved in processing of the 5'-end of pre-16S rRNA. The polypeptide is Putative pre-16S rRNA nuclease (Clostridium perfringens (strain ATCC 13124 / DSM 756 / JCM 1290 / NCIMB 6125 / NCTC 8237 / Type A)).